The sequence spans 232 residues: Octanoyltransferase (232 aa).

Residues 44 to 219 (EHTGDELWVV…QLARQFGLVL (176 aa)) enclose the BPL/LPL catalytic domain. Substrate is bound by residues 83–90 (RGGQVTYH), 150–152 (ALG), and 163–165 (GLS). Residue cysteine 181 is the Acyl-thioester intermediate of the active site.

This sequence belongs to the LipB family.

Its subcellular location is the cytoplasm. The catalysed reaction is octanoyl-[ACP] + L-lysyl-[protein] = N(6)-octanoyl-L-lysyl-[protein] + holo-[ACP] + H(+). It participates in protein modification; protein lipoylation via endogenous pathway; protein N(6)-(lipoyl)lysine from octanoyl-[acyl-carrier-protein]: step 1/2. Catalyzes the transfer of endogenously produced octanoic acid from octanoyl-acyl-carrier-protein onto the lipoyl domains of lipoate-dependent enzymes. Lipoyl-ACP can also act as a substrate although octanoyl-ACP is likely to be the physiological substrate. In Xanthomonas campestris pv. campestris (strain 8004), this protein is Octanoyltransferase.